A 419-amino-acid polypeptide reads, in one-letter code: Histidine--tRNA ligase (419 aa).

It belongs to the class-II aminoacyl-tRNA synthetase family. Homodimer.

Its subcellular location is the cytoplasm. The catalysed reaction is tRNA(His) + L-histidine + ATP = L-histidyl-tRNA(His) + AMP + diphosphate + H(+). This Thiobacillus denitrificans (strain ATCC 25259 / T1) protein is Histidine--tRNA ligase.